Consider the following 166-residue polypeptide: Large ribosomal subunit protein uL10 (166 aa).

The protein belongs to the universal ribosomal protein uL10 family. As to quaternary structure, part of the ribosomal stalk of the 50S ribosomal subunit. The N-terminus interacts with L11 and the large rRNA to form the base of the stalk. The C-terminus forms an elongated spine to which L12 dimers bind in a sequential fashion forming a multimeric L10(L12)X complex.

Functionally, forms part of the ribosomal stalk, playing a central role in the interaction of the ribosome with GTP-bound translation factors. The chain is Large ribosomal subunit protein uL10 from Limosilactobacillus reuteri (strain DSM 20016) (Lactobacillus reuteri).